The following is a 309-amino-acid chain: 1,4-dihydroxy-2-naphthoyl-CoA synthase (309 aa).

Residues Arg-53, 98–102, Tyr-110, 152–156, Thr-179, Ser-185, Tyr-282, and Lys-297 each bind substrate; these read SGGDQ and WAAGG.

Belongs to the enoyl-CoA hydratase/isomerase family. MenB subfamily.

The catalysed reaction is 2-succinylbenzoyl-CoA + H(+) = 1,4-dihydroxy-2-naphthoyl-CoA + H2O. Its pathway is quinol/quinone metabolism; 1,4-dihydroxy-2-naphthoate biosynthesis; 1,4-dihydroxy-2-naphthoate from chorismate: step 6/7. It participates in quinol/quinone metabolism; menaquinone biosynthesis. Its function is as follows. Converts o-succinylbenzoyl-CoA (OSB-CoA) to 1,4-dihydroxy-2-naphthoyl-CoA (DHNA-CoA). This chain is 1,4-dihydroxy-2-naphthoyl-CoA synthase, found in Mycolicibacterium smegmatis (strain ATCC 700084 / mc(2)155) (Mycobacterium smegmatis).